The chain runs to 676 residues: LIM domain-containing protein 1 (676 aa).

The tract at residues 54-134 (KIHLQQQQQQ…PPYPPQEQRS (81 aa)) is mediates nuclear export. Disordered stretches follow at residues 104–163 (KPPL…SAFH) and 189–389 (KWGD…TSLV). Position 145 is a phosphoserine (serine 145). Positions 186–260 (ASPKWGDKPG…IGGRSSEKPT (75 aa)) are interaction with EGLN1/PHD2. 2 stretches are compositionally biased toward low complexity: residues 201 to 213 (GLSV…SSPG) and 232 to 242 (LSLSSSRSSEG). Serine 233 and serine 239 each carry phosphoserine. The span at 243 to 253 (SLGGQNSGIGG) shows a compositional bias: gly residues. The segment covering 262–271 (LWSTASSQRV) has biased composition (polar residues). 4 positions are modified to phosphoserine: serine 272, serine 277, serine 304, and serine 316. The segment covering 343-360 (SYLSSSAPSSSPAGLDGS) has biased composition (low complexity). The segment at 404–442 (GPLGWSSDGSLGSVLLDSPSSPRVRLPCQPLVPGPELRP) is interaction with RB1. Phosphoserine is present on residues serine 421 and serine 424. LIM zinc-binding domains follow at residues 470 to 531 (GACV…SGFQ), 535 to 595 (DRCF…VLAP), and 595 to 664 (PKCA…RLEK). Positions 472 to 676 (CVKCSKGVFG…SSTALHQHHF (205 aa)) are necessary for nuclear localization.

The protein belongs to the zyxin/ajuba family. As to quaternary structure, interacts (via LIM domains) with TRAF6. Found in a complex with TRAF6, PRKCZ and SQSTM1. Interacts (via LIM domains) SNAI2/SLUG (via SNAG domain) and SCRT1 (via SNAG domain). Interacts with SQSTM1 and RB1. Found in a complex composed of LIMD1, VHL, EGLN1/PHD2, ELOB and CUL2. Interacts with EIF4E, AGO1, AGO2, DCP2, DDX6, LATS1, LATS2, EGLN1/PHD2, EGLN2/PHD1 and EGLN3/PHD3. Interacts (via LIM zinc-binding 2) with isoform 1 and isoform 3 of VHL. Interacts (via LIM domains) with SNAI1 (via SNAG domain). In terms of processing, phosphorylated during mitosis. As to expression, expressed in normal and breast cancer tissues (at protein level). Ubiquitous.

Its subcellular location is the cytoplasm. It is found in the nucleus. The protein resides in the P-body. It localises to the cell junction. The protein localises to the adherens junction. Its subcellular location is the focal adhesion. Functionally, adapter or scaffold protein which participates in the assembly of numerous protein complexes and is involved in several cellular processes such as cell fate determination, cytoskeletal organization, repression of gene transcription, cell-cell adhesion, cell differentiation, proliferation and migration. Positively regulates microRNA (miRNA)-mediated gene silencing and is essential for P-body formation and integrity. Acts as a hypoxic regulator by bridging an association between the prolyl hydroxylases and VHL enabling efficient degradation of HIF1A. Acts as a transcriptional corepressor for SNAI1- and SNAI2/SLUG-dependent repression of E-cadherin transcription. Negatively regulates the Hippo signaling pathway and antagonizes phosphorylation of YAP1. Inhibits E2F-mediated transcription, and suppresses the expression of the majority of genes with E2F1-responsive elements. Regulates osteoblast development, function, differentiation and stress osteoclastogenesis. Enhances the ability of TRAF6 to activate adapter protein complex 1 (AP-1) and negatively regulates the canonical Wnt receptor signaling pathway in osteoblasts. May act as a tumor suppressor by inhibiting cell proliferation. The sequence is that of LIM domain-containing protein 1 (LIMD1) from Homo sapiens (Human).